A 969-amino-acid polypeptide reads, in one-letter code: Isoleucine--tRNA ligase (969 aa).

The short motif at Pro-70–His-80 is the 'HIGH' region element. Residue Glu-601 coordinates L-isoleucyl-5'-AMP. The 'KMSKS' region motif lies at Lys-642–Ser-646. Residue Lys-645 coordinates ATP.

It belongs to the class-I aminoacyl-tRNA synthetase family. IleS type 1 subfamily. In terms of assembly, monomer.

It localises to the cytoplasm. The enzyme catalyses tRNA(Ile) + L-isoleucine + ATP = L-isoleucyl-tRNA(Ile) + AMP + diphosphate. Functionally, catalyzes the attachment of isoleucine to tRNA(Ile). As IleRS can inadvertently accommodate and process structurally similar amino acids such as valine, to avoid such errors it has two additional distinct tRNA(Ile)-dependent editing activities. One activity is designated as 'pretransfer' editing and involves the hydrolysis of activated Val-AMP. The other activity is designated 'posttransfer' editing and involves deacylation of mischarged Val-tRNA(Ile). The chain is Isoleucine--tRNA ligase from Caulobacter vibrioides (strain ATCC 19089 / CIP 103742 / CB 15) (Caulobacter crescentus).